A 738-amino-acid polypeptide reads, in one-letter code: LPS-assembly protein LptD (738 aa).

The N-terminal stretch at methionine 1–alanine 26 is a signal peptide.

It belongs to the LptD family. In terms of assembly, component of the lipopolysaccharide transport and assembly complex. Interacts with LptE and LptA.

It is found in the cell outer membrane. In terms of biological role, together with LptE, is involved in the assembly of lipopolysaccharide (LPS) at the surface of the outer membrane. This Nitrosococcus oceani (strain ATCC 19707 / BCRC 17464 / JCM 30415 / NCIMB 11848 / C-107) protein is LPS-assembly protein LptD.